The chain runs to 465 residues: ATP synthase subunit beta (465 aa).

148 to 155 (GGAGVGKT) provides a ligand contact to ATP.

Belongs to the ATPase alpha/beta chains family. F-type ATPases have 2 components, CF(1) - the catalytic core - and CF(0) - the membrane proton channel. CF(1) has five subunits: alpha(3), beta(3), gamma(1), delta(1), epsilon(1). CF(0) has three main subunits: a(1), b(2) and c(9-12). The alpha and beta chains form an alternating ring which encloses part of the gamma chain. CF(1) is attached to CF(0) by a central stalk formed by the gamma and epsilon chains, while a peripheral stalk is formed by the delta and b chains.

Its subcellular location is the cell inner membrane. It carries out the reaction ATP + H2O + 4 H(+)(in) = ADP + phosphate + 5 H(+)(out). Produces ATP from ADP in the presence of a proton gradient across the membrane. The catalytic sites are hosted primarily by the beta subunits. This Neisseria meningitidis serogroup A / serotype 4A (strain DSM 15465 / Z2491) protein is ATP synthase subunit beta.